A 201-amino-acid chain; its full sequence is MELVLKDAQSALTVSETTFGRDFNEALVHQVVVAYAAGARQGTRAQKTRAEITGSGKKPWRQKGTGRARSGSIKSPIWRSGGVTFAARPQDHSQKVNKKMYRGALKSILSELVRQDRLIVVEKFSVEAPKTKLLAQKLKDMALEDVLIITGELDENLFLAARNLHKVDVRDANGIDPVSLIAFDKVVMTADAVKQVEEMLA.

Residues 46-71 (QKTRAEITGSGKKPWRQKGTGRARSG) are disordered.

It belongs to the universal ribosomal protein uL4 family. Part of the 50S ribosomal subunit.

Its function is as follows. One of the primary rRNA binding proteins, this protein initially binds near the 5'-end of the 23S rRNA. It is important during the early stages of 50S assembly. It makes multiple contacts with different domains of the 23S rRNA in the assembled 50S subunit and ribosome. In terms of biological role, forms part of the polypeptide exit tunnel. This is Large ribosomal subunit protein uL4 from Klebsiella pneumoniae (strain 342).